We begin with the raw amino-acid sequence, 231 residues long: Ureidoacrylate amidohydrolase RutB (231 aa).

Asp-25 serves as the catalytic Proton acceptor. Residue Lys-134 is part of the active site. The active-site Nucleophile is Cys-167.

It belongs to the isochorismatase family. RutB subfamily.

The enzyme catalyses (Z)-3-ureidoacrylate + H2O + H(+) = (Z)-3-aminoacrylate + NH4(+) + CO2. It carries out the reaction (Z)-3-ureidoacrylate + H2O = (Z)-3-aminoacrylate + carbamate + H(+). The catalysed reaction is (Z)-2-methylureidoacrylate + H2O + H(+) = (Z)-2-methylaminoacrylate + NH4(+) + CO2. In terms of biological role, hydrolyzes ureidoacrylate to form aminoacrylate and carbamate. The carbamate hydrolyzes spontaneously, thereby releasing one of the nitrogen atoms of the pyrimidine ring as ammonia and one of its carbon atoms as CO2. This chain is Ureidoacrylate amidohydrolase RutB, found in Escherichia coli O9:H4 (strain HS).